The chain runs to 277 residues: Large ribosomal subunit protein uL2 (277 aa).

A disordered region spans residues 222–277 (GVAMNPVDHPHGGGEGRTSGGRHPVSPWGKPTKGKRTRSNKATDKFIMRSRHQRKK).

The protein belongs to the universal ribosomal protein uL2 family. As to quaternary structure, part of the 50S ribosomal subunit. Forms a bridge to the 30S subunit in the 70S ribosome.

In terms of biological role, one of the primary rRNA binding proteins. Required for association of the 30S and 50S subunits to form the 70S ribosome, for tRNA binding and peptide bond formation. It has been suggested to have peptidyltransferase activity; this is somewhat controversial. Makes several contacts with the 16S rRNA in the 70S ribosome. This Bartonella bacilliformis (strain ATCC 35685 / KC583 / Herrer 020/F12,63) protein is Large ribosomal subunit protein uL2.